A 635-amino-acid chain; its full sequence is Glutamine--fructose-6-phosphate aminotransferase [isomerizing] (635 aa).

Catalysis depends on Cys2, which acts as the Nucleophile; for GATase activity. The Glutamine amidotransferase type-2 domain occupies 2 to 218; sequence CGIVGMVAGR…EGDIADVHRD (217 aa). SIS domains follow at residues 299-439 and 472-625; these read FERL…AKKI and CARH…IDQP. Lys630 acts as the For Fru-6P isomerization activity in catalysis.

As to quaternary structure, homodimer.

The protein localises to the cytoplasm. It catalyses the reaction D-fructose 6-phosphate + L-glutamine = D-glucosamine 6-phosphate + L-glutamate. Its function is as follows. Catalyzes the first step in hexosamine metabolism, converting fructose-6P into glucosamine-6P using glutamine as a nitrogen source. The chain is Glutamine--fructose-6-phosphate aminotransferase [isomerizing] from Treponema pallidum (strain Nichols).